The chain runs to 318 residues: Nucleotide-binding protein Lcho_3490 (318 aa).

35–42 (GISGGGKS) contacts ATP. GTP is bound at residue 84–87 (DVRN).

This sequence belongs to the RapZ-like family.

Its function is as follows. Displays ATPase and GTPase activities. This chain is Nucleotide-binding protein Lcho_3490, found in Leptothrix cholodnii (strain ATCC 51168 / LMG 8142 / SP-6) (Leptothrix discophora (strain SP-6)).